The sequence spans 449 residues: PGL/p-HBAD biosynthesis rhamnosyltransferase (449 aa).

The protein belongs to the glycosyltransferase 28 family.

In terms of biological role, catalyzes the transfer of the first rhamnosyl residue on p-hydroxybenzoic acid or phenolphthiocerol derivatives to form, after O-methylation at position 2 of the sugar unit, mono-O-methyl-glycosyl-p-hydroxybenzoic acid derivative (p-HBAD I) and 2-O-methyl-rhamnosyl-phenolphthiocerol dimycocerosate (also called mycoside B) during p-hydroxybenzoic acid derivatives (p-HBAD) and glycosylated phenolphthiocerol dimycocerosates (PGL) biosynthesis. This chain is PGL/p-HBAD biosynthesis rhamnosyltransferase, found in Mycobacterium bovis (strain BCG / Pasteur 1173P2).